The primary structure comprises 461 residues: V-type ATP synthase beta chain (461 aa).

This sequence belongs to the ATPase alpha/beta chains family.

In terms of biological role, produces ATP from ADP in the presence of a proton gradient across the membrane. The V-type beta chain is a regulatory subunit. The chain is V-type ATP synthase beta chain from Clostridium botulinum (strain Langeland / NCTC 10281 / Type F).